Consider the following 448-residue polypeptide: U1 small nuclear ribonucleoprotein 70 kDa (448 aa).

A required for interaction with U1 RNA region spans residues 91–201 (TEIKNATEDP…GGGLGGTRRG (111 aa)). The RRM domain occupies 102 to 180 (RTLFIARINY…KRVLVDVERA (79 aa)). The tract at residues 188–448 (PRRLGGGLGG…SSGDPSWWRQ (261 aa)) is disordered. Over residues 191–200 (LGGGLGGTRR) the composition is skewed to gly residues. Basic and acidic residues-rich tracts occupy residues 206-234 (NIKH…REGP) and 262-272 (ERRDRERDRGR). Residues 281 to 293 (SRSRSRERRKRRA) are compositionally biased toward basic residues. Composition is skewed to basic and acidic residues over residues 294 to 320 (GSRE…DRER) and 346 to 376 (RDRE…IKEE). The interval 405 to 425 (RPPPAHHNMFSVPPPPILGRG) is mediates binding to Psi. Polar residues predominate over residues 426–448 (NASTNPNPDNGQQSSGDPSWWRQ).

In terms of assembly, component of the U1 snRNP. Interacts with Psi; essential for alternative splicing of P-element transposase. Interacts with the SMN complex.

Its subcellular location is the nucleus speckle. The protein resides in the nucleus. It localises to the nucleoplasm. Functionally, mediates the splicing of pre-mRNA by binding to the stem loop I region of U1-snRNA. Required during oogenesis for nurse cell chromatin dispersal. This chain is U1 small nuclear ribonucleoprotein 70 kDa (snRNP-U1-70K), found in Drosophila melanogaster (Fruit fly).